The primary structure comprises 371 residues: Queuine tRNA-ribosyltransferase (371 aa).

Aspartate 89 acts as the Proton acceptor in catalysis. Substrate contacts are provided by residues 89–93 (DSGGF), aspartate 143, glutamine 185, and glycine 212. Residues 243–249 (GVGKPED) form an RNA binding region. Aspartate 262 functions as the Nucleophile in the catalytic mechanism. An RNA binding; important for wobble base 34 recognition region spans residues 267–271 (TRNAR). Residues cysteine 300, cysteine 302, cysteine 305, and histidine 331 each coordinate Zn(2+).

Belongs to the queuine tRNA-ribosyltransferase family. Homodimer. Within each dimer, one monomer is responsible for RNA recognition and catalysis, while the other monomer binds to the replacement base PreQ1. Zn(2+) is required as a cofactor.

It catalyses the reaction 7-aminomethyl-7-carbaguanine + guanosine(34) in tRNA = 7-aminomethyl-7-carbaguanosine(34) in tRNA + guanine. Its pathway is tRNA modification; tRNA-queuosine biosynthesis. Catalyzes the base-exchange of a guanine (G) residue with the queuine precursor 7-aminomethyl-7-deazaguanine (PreQ1) at position 34 (anticodon wobble position) in tRNAs with GU(N) anticodons (tRNA-Asp, -Asn, -His and -Tyr). Catalysis occurs through a double-displacement mechanism. The nucleophile active site attacks the C1' of nucleotide 34 to detach the guanine base from the RNA, forming a covalent enzyme-RNA intermediate. The proton acceptor active site deprotonates the incoming PreQ1, allowing a nucleophilic attack on the C1' of the ribose to form the product. After dissociation, two additional enzymatic reactions on the tRNA convert PreQ1 to queuine (Q), resulting in the hypermodified nucleoside queuosine (7-(((4,5-cis-dihydroxy-2-cyclopenten-1-yl)amino)methyl)-7-deazaguanosine). This is Queuine tRNA-ribosyltransferase from Pseudomonas syringae pv. tomato (strain ATCC BAA-871 / DC3000).